The sequence spans 267 residues: 5'-nucleotidase SurE (267 aa).

Residues Asp-14, Asp-15, Ser-45, and Asn-100 each contribute to the a divalent metal cation site.

Belongs to the SurE nucleotidase family. It depends on a divalent metal cation as a cofactor.

It localises to the cytoplasm. It catalyses the reaction a ribonucleoside 5'-phosphate + H2O = a ribonucleoside + phosphate. In terms of biological role, nucleotidase that shows phosphatase activity on nucleoside 5'-monophosphates. In Methanosarcina barkeri (strain Fusaro / DSM 804), this protein is 5'-nucleotidase SurE.